We begin with the raw amino-acid sequence, 420 residues long: Argininosuccinate synthase (420 aa).

23 to 31 (AYSGGLDTS) lines the ATP pocket. An L-citrulline-binding site is contributed by Tyr102. ATP is bound at residue Gly132. Positions 134, 138, and 139 each coordinate L-aspartate. An L-citrulline-binding site is contributed by Asn138. Positions 142, 190, 274, and 286 each coordinate L-citrulline.

It belongs to the argininosuccinate synthase family. Type 1 subfamily. In terms of assembly, homotetramer.

It localises to the cytoplasm. The enzyme catalyses L-citrulline + L-aspartate + ATP = 2-(N(omega)-L-arginino)succinate + AMP + diphosphate + H(+). Its pathway is amino-acid biosynthesis; L-arginine biosynthesis; L-arginine from L-ornithine and carbamoyl phosphate: step 2/3. The protein is Argininosuccinate synthase of Renibacterium salmoninarum (strain ATCC 33209 / DSM 20767 / JCM 11484 / NBRC 15589 / NCIMB 2235).